A 97-amino-acid chain; its full sequence is MKIYAVLLCLLLIAVPVSPEKLTGPDKAPVTCCFHVLKLKIPLRVLKSYERINNIQCPMEAVVFQTKQGMSLCVDPTQKWVSEYMEILDQKSQILQP.

A signal peptide spans 1-23; sequence MKIYAVLLCLLLIAVPVSPEKLT. Intrachain disulfides connect cysteine 32/cysteine 57 and cysteine 33/cysteine 73.

This sequence belongs to the intercrine beta (chemokine CC) family. Monomer or homodimer; in equilibrium.

The protein resides in the secreted. Its function is as follows. Chemotactic factor that attracts monocytes. This protein can bind heparin. The polypeptide is C-C motif chemokine 8 (Ccl8) (Mus musculus (Mouse)).